The following is a 612-amino-acid chain: BTB/POZ domain-containing protein 9 (612 aa).

The region spanning 36–104 is the BTB domain; sequence GDVTFVVEKK…IYTGRATLTD (69 aa). In terms of domain architecture, BACK spans 142–240; sequence VCMTFDVASL…SLTELLNVVR (99 aa). The segment at 560–612 is disordered; sequence QSSQKEENSEESGTGDTSLAGQQLDSHALRAPSGSSLPSSPGSNSRSPNRQHQ. Polar residues predominate over residues 573–584; the sequence is TGDTSLAGQQLD. Residues 588 to 612 show a composition bias toward low complexity; sequence LRAPSGSSLPSSPGSNSRSPNRQHQ.

Detected in the brain (at protein level). Moderately expressed in all specific brain regions examined. Expressed in the dopaminergic neurons of the substantia nigra and A11 neurons. Highly expressed in kidney and moderately expressed in all other adult and fetal tissues.

The protein is BTB/POZ domain-containing protein 9 (BTBD9) of Homo sapiens (Human).